The sequence spans 96 residues: Redox-responsive transcriptional regulator WhiB3 (96 aa).

The region spanning 22–86 is the 4Fe-4S Wbl-type domain; the sequence is LCRGVDSSMF…GGLSESEREL (65 aa). Cysteine 23, cysteine 53, cysteine 56, and cysteine 62 together coordinate [4Fe-4S] cluster.

The protein belongs to the WhiB family. [4Fe-4S] cluster serves as cofactor. Post-translationally, the Fe-S cluster can be nitrosylated by nitric oxide (NO). In terms of processing, upon Fe-S cluster removal intramolecular disulfide bonds are formed.

It is found in the cytoplasm. In terms of biological role, a redox-sensitive transcriptional regulator. Maintains intracellular redox homeostasis by regulating catabolic metabolism and polyketide biosynthesis. Regulates expression of the redox buffer ergothioneine (ERG). In concert with myothiol (MSH), another redox buffer, responds to low pH leading to acid resistance. The apo- but not holo-form probably binds DNA. The chain is Redox-responsive transcriptional regulator WhiB3 (whiB3) from Mycolicibacterium smegmatis (strain ATCC 700084 / mc(2)155) (Mycobacterium smegmatis).